A 561-amino-acid polypeptide reads, in one-letter code: AT-rich interactive domain-containing protein 3B (561 aa).

Residue Met-1 is modified to N-acetylmethionine. The span at Met-1 to Gln-17 shows a compositional bias: low complexity. Disordered regions lie at residues Met-1 to Arg-36, Leu-53 to Phe-122, and Pro-136 to Asp-179. A Phosphoserine modification is found at Ser-89. Residues Glu-90–Glu-109 are compositionally biased toward acidic residues. Positions Gln-152–Ser-162 are enriched in basic and acidic residues. Residues Ala-164–Leu-178 are compositionally biased toward polar residues. Ser-165 is subject to Phosphoserine. Residues Ser-203–Leu-365 form an interaction with RB1 region. An ARID domain is found at Asp-215–Lys-307. A Phosphoserine modification is found at Ser-311. Position 361 is an asymmetric dimethylarginine (Arg-361). Residues Ser-370 to Val-397 form a disordered region. The REKLES domain maps to Ala-419–Val-517. Residues Ser-490–Gln-513 are interaction with ARID3A. Low complexity predominate over residues Ser-523 to Ser-552. The disordered stretch occupies residues Ser-523 to Leu-561.

As to quaternary structure, heterodimer with ARID3A. Interacts with unphosphorylated RB1. In terms of tissue distribution, expressed in placenta, testis and leukocytes. Expressed in neuroblastoma. Present in K-562 erythrocytic leukemia cell line (at protein level).

Its subcellular location is the nucleus. Its function is as follows. Transcription factor which may be involved in neuroblastoma growth and malignant transformation. Favors nuclear targeting of ARID3A. The sequence is that of AT-rich interactive domain-containing protein 3B (ARID3B) from Homo sapiens (Human).